Consider the following 441-residue polypeptide: Amino-acid acetyltransferase (441 aa).

The region spanning 295–434 (EQVRRATIND…QALYNYQRRS (140 aa)) is the N-acetyltransferase domain.

This sequence belongs to the acetyltransferase family. ArgA subfamily. In terms of assembly, homohexamer.

It is found in the cytoplasm. It catalyses the reaction L-glutamate + acetyl-CoA = N-acetyl-L-glutamate + CoA + H(+). The protein operates within amino-acid biosynthesis; L-arginine biosynthesis; N(2)-acetyl-L-ornithine from L-glutamate: step 1/4. The sequence is that of Amino-acid acetyltransferase from Pectobacterium atrosepticum (strain SCRI 1043 / ATCC BAA-672) (Erwinia carotovora subsp. atroseptica).